Here is a 244-residue protein sequence, read N- to C-terminus: MARWRRRLGVAALGAAMLASLAPAARASLVITGTRVIYNAGSPETTVKMSNEGQAPALMQAWIDDGNAEAKPDEVQVPFFLTPPLARVDPGKGQTLRIFFNGYPDGKTLPSDRESVFWLNVLEVPPKATPEEGHGVLQLTIRSRLKLFYRPKGLSGNPLTAAADLTFKRKPNGVLEVHNPTPYYVNLQKLEVGENGAHGSKTPWMLAPLSSDELRLKGTGAKSVQYWAIDDFGGVTPYQAAIAD.

Positions 1 to 24 are cleaved as a signal peptide; that stretch reads MARWRRRLGVAALGAAMLASLAPA.

This sequence belongs to the periplasmic pilus chaperone family.

The protein localises to the periplasm. In terms of biological role, required for the biogenesis of the filamentous hemagglutinin and the fimbria. The sequence is that of Chaperone protein FimB/FhaD (fimB) from Bordetella pertussis (strain Tohama I / ATCC BAA-589 / NCTC 13251).